A 701-amino-acid chain; its full sequence is Elongation factor G (701 aa).

A tr-type G domain is found at 8 to 291 (GRYRNIGIVA…AVIDYLPAPT (284 aa)). Residues 17 to 24 (AHVDAGKT), 89 to 93 (DTPGH), and 143 to 146 (NKMD) contribute to the GTP site.

Belongs to the TRAFAC class translation factor GTPase superfamily. Classic translation factor GTPase family. EF-G/EF-2 subfamily.

It is found in the cytoplasm. Functionally, catalyzes the GTP-dependent ribosomal translocation step during translation elongation. During this step, the ribosome changes from the pre-translocational (PRE) to the post-translocational (POST) state as the newly formed A-site-bound peptidyl-tRNA and P-site-bound deacylated tRNA move to the P and E sites, respectively. Catalyzes the coordinated movement of the two tRNA molecules, the mRNA and conformational changes in the ribosome. The sequence is that of Elongation factor G from Pseudomonas syringae pv. syringae (strain B728a).